Consider the following 120-residue polypeptide: Large ribosomal subunit protein bL21 (120 aa).

This sequence belongs to the bacterial ribosomal protein bL21 family. In terms of assembly, part of the 50S ribosomal subunit. Contacts protein L20.

This protein binds to 23S rRNA in the presence of protein L20. In Roseiflexus sp. (strain RS-1), this protein is Large ribosomal subunit protein bL21.